A 272-amino-acid chain; its full sequence is Rhamnulose-1-phosphate aldolase (272 aa).

Glu117 is a catalytic residue. 3 residues coordinate Zn(2+): His141, His143, and His212.

The protein belongs to the aldolase class II family. RhaD subfamily. Zn(2+) is required as a cofactor.

Its subcellular location is the cytoplasm. The catalysed reaction is L-rhamnulose 1-phosphate = (S)-lactaldehyde + dihydroxyacetone phosphate. It functions in the pathway carbohydrate degradation; L-rhamnose degradation; glycerone phosphate from L-rhamnose: step 3/3. Its function is as follows. Catalyzes the reversible cleavage of L-rhamnulose-1-phosphate to dihydroxyacetone phosphate (DHAP) and L-lactaldehyde. The polypeptide is Rhamnulose-1-phosphate aldolase (Mannheimia succiniciproducens (strain KCTC 0769BP / MBEL55E)).